A 298-amino-acid polypeptide reads, in one-letter code: Junctional adhesion molecule B (298 aa).

Residues 1-28 (MARSPQGLLMLLLLHYLIVALDYHKANG) form the signal peptide. The Extracellular portion of the chain corresponds to 29–236 (FSASKDHRQE…GKRMQVDVLN (208 aa)). Residues 32 to 128 (SKDHRQEVTV…GQNLQEDKVM (97 aa)) enclose the Ig-like V-type domain. 2 cysteine pairs are disulfide-bonded: C51–C110 and C156–C214. The N-linked (GlcNAc...) asparagine glycan is linked to N99. Positions 135-238 (PAVPACEVPT…RMQVDVLNIS (104 aa)) constitute an Ig-like C2-type domain. A helical transmembrane segment spans residues 237 to 257 (ISGIIATVVVVAFVISVCGLG). The Cytoplasmic portion of the chain corresponds to 258 to 298 (TCYAQRKGYFSKETSFQKGSPASKVTTMSENDFKHTKSFII).

Belongs to the immunoglobulin superfamily. Post-translationally, the expression in Sertoli cells is regulated by TGFB3 through ubiquitin-mediated proteasomal degradation. In terms of tissue distribution, expressed by bone marrow stromal cells (at protein level). Expressed in skin (at protein level). Expressed in testis by Sertoli cells (at protein level). Expressed by dorsal root ganglion and spinal cord neurons.

The protein resides in the cell membrane. Its subcellular location is the cell junction. It is found in the tight junction. In terms of biological role, junctional adhesion protein that mediates heterotypic cell-cell interactions with its cognate receptor JAM3 to regulate different cellular processes. Plays a role in homing and mobilization of hematopoietic stem and progenitor cells within the bone marrow. At the surface of bone marrow stromal cells, it contributes to the retention of the hematopoietic stem and progenitor cells expressing JAM3. Plays a central role in leukocytes extravasation by facilitating not only transmigration but also tethering and rolling of leukocytes along the endothelium. Tethering and rolling of leukocytes are dependent on the binding by JAM2 of the integrin alpha-4/beta-1. Plays a role in spermatogenesis where JAM2 and JAM3, which are respectively expressed by Sertoli and germ cells, mediate an interaction between both cell types and play an essential role in the anchorage of germ cells onto Sertoli cells and the assembly of cell polarity complexes during spermatid differentiation. Also functions as an inhibitory somatodendritic cue that prevents the myelination of non-axonal parts of neurons. During myogenesis, it is involved in myocyte fusion. May also play a role in angiogenesis. In Mus musculus (Mouse), this protein is Junctional adhesion molecule B.